A 61-amino-acid polypeptide reads, in one-letter code: Insect toxin AaHIT5 (61 aa).

One can recognise an LCN-type CS-alpha/beta domain in the interval 1 to 61 (DGYIKRHDGC…AWKSETNTCD (61 aa)). Cystine bridges form between cysteine 10–cysteine 60, cysteine 14–cysteine 35, cysteine 21–cysteine 42, and cysteine 25–cysteine 44.

Expressed by the venom gland.

Its subcellular location is the secreted. Excitatory insect toxins induce a spastic paralysis. They bind voltage-independently to sodium channels (Nav) and shift the voltage of activation toward more negative potentials thereby affecting sodium channel activation and promoting spontaneous and repetitive firing. This toxin elicits excitatory activity with no flaccid paralysis despite its high degree of sequence similarity with other depressant insect toxins. This toxin is active only on insects. This is Insect toxin AaHIT5 from Androctonus australis (Sahara scorpion).